Here is a 136-residue protein sequence, read N- to C-terminus: MALNIRVMAPNRIVWNSEAQEIILSTNSGQIGILPNHAPLLTALDIGIMRILVNGQWTSMALMGGFALVDNNQLTILVNEAEKASEIDPKEAENNFELAKQNLAAAEGRKQIIEANLSFQRAKARLDAVNASSRLG.

Belongs to the ATPase epsilon chain family. In terms of assembly, F-type ATPases have 2 components, CF(1) - the catalytic core - and CF(0) - the membrane proton channel. CF(1) has five subunits: alpha(3), beta(3), gamma(1), delta(1), epsilon(1). CF(0) has three main subunits: a, b and c.

It is found in the plastid. Its subcellular location is the chloroplast thylakoid membrane. Functionally, produces ATP from ADP in the presence of a proton gradient across the membrane. The protein is ATP synthase epsilon chain, chloroplastic of Chaetosphaeridium globosum (Charophycean green alga).